The sequence spans 134 residues: MGQKEQTLAYGTGRRKTSVAKVRLIPGKGEILINSKPANLYLQYNLSYLAAVKSPLESLGLANEYNVIVNTQGGGLTGQSEAIRLGLARALCQISLTHRPLLKSDHHLTRDARAKERKKYGLHKARKAPQYSKR.

A compositionally biased stretch (basic and acidic residues) spans 105–114 (DHHLTRDARA). The tract at residues 105–134 (DHHLTRDARAKERKKYGLHKARKAPQYSKR) is disordered. Positions 115-134 (KERKKYGLHKARKAPQYSKR) are enriched in basic residues.

This sequence belongs to the universal ribosomal protein uS9 family.

The protein resides in the plastid. Its subcellular location is the cyanelle. This is Small ribosomal subunit protein uS9c (rps9) from Cyanophora paradoxa.